Reading from the N-terminus, the 73-residue chain is Small ribosomal subunit protein bS18 (73 aa).

Belongs to the bacterial ribosomal protein bS18 family. In terms of assembly, part of the 30S ribosomal subunit. Forms a tight heterodimer with protein bS6.

In terms of biological role, binds as a heterodimer with protein bS6 to the central domain of the 16S rRNA, where it helps stabilize the platform of the 30S subunit. The chain is Small ribosomal subunit protein bS18 from Synechococcus sp. (strain RCC307).